Consider the following 217-residue polypeptide: Dense granule protein 1 (217 aa).

Positions 1 to 19 are cleaved as a signal peptide; the sequence is MARQATFIVALCVCGLAIA. Polar residues predominate over residues 171 to 183; that stretch reads VASEDSALGNSEE. Residues 171–217 form a disordered region; sequence VASEDSALGNSEEQYVEGTVNGSSDPEQERAGGPLIPEGDEQEVDTE. Residue asparagine 191 is glycosylated (N-linked (GlcNAc...) asparagine). Residues 208–217 show a composition bias toward acidic residues; that stretch reads EGDEQEVDTE.

Belongs to the Gra7 family.

It is found in the secreted. In Neospora caninum (Coccidian parasite), this protein is Dense granule protein 1 (DG1).